Consider the following 24-residue polypeptide: Ascaphin-6 (24 aa).

In terms of tissue distribution, expressed by the skin glands.

The protein resides in the secreted. In terms of biological role, antimicrobial peptide that shows higher potency against Gram-negative bacteria than against Gram-positive bacteria. Has a very week hemolytic activity. This Ascaphus truei (Coastal tailed frog) protein is Ascaphin-6.